The primary structure comprises 408 residues: MEMEAKRSRLLTTARPYLQVLSLFGLTPPAEFFTRTLRKRRRFCWMAGYSLYLIAILLMVFYEFHANIVSLHLEIYKFHVEDFSKVMGRTQKFLIVAIATCNQLNILLNYGRLGLIYDEIANLDLGIDKSSKNFCGKSHWWSFRLRLTLSIGLWMVIIIGVIPRLTLGRAGPFFHWVNQVLTQIILIMLQLKGPEYCLFVLLVYELILRTRHVLEQLKDDLEDFDCGARIQELCVTLKQNQLLIGRIWRLVDEIGAYFRWSMTLLFLYNGLTILHVVNWAIIRSIDPNDCCQLNRLGSITFLSFNLLLTCFFSECCVKTYNSISYILHQIGCLPTAEEFQMLKMGLKEYILQMQHLKLLFTCGGLFDINIKLFGGMLVTLCGYVIIIVQFKIQDFALIGYRQNTSDTS.

Topologically, residues 1–42 (MEMEAKRSRLLTTARPYLQVLSLFGLTPPAEFFTRTLRKRRR) are cytoplasmic. The helical transmembrane segment at 43–63 (FCWMAGYSLYLIAILLMVFYE) threads the bilayer. Topologically, residues 64–92 (FHANIVSLHLEIYKFHVEDFSKVMGRTQK) are extracellular. A helical transmembrane segment spans residues 93 to 113 (FLIVAIATCNQLNILLNYGRL). Over 114–146 (GLIYDEIANLDLGIDKSSKNFCGKSHWWSFRLR) the chain is Cytoplasmic. Residues 147-167 (LTLSIGLWMVIIIGVIPRLTL) form a helical membrane-spanning segment. Residues 168-183 (GRAGPFFHWVNQVLTQ) are Extracellular-facing. The helical transmembrane segment at 184–204 (IILIMLQLKGPEYCLFVLLVY) threads the bilayer. Topologically, residues 205-261 (ELILRTRHVLEQLKDDLEDFDCGARIQELCVTLKQNQLLIGRIWRLVDEIGAYFRWS) are cytoplasmic. A helical transmembrane segment spans residues 262 to 282 (MTLLFLYNGLTILHVVNWAII). Over 283–296 (RSIDPNDCCQLNRL) the chain is Extracellular. A helical transmembrane segment spans residues 297–317 (GSITFLSFNLLLTCFFSECCV). Residues 318–367 (KTYNSISYILHQIGCLPTAEEFQMLKMGLKEYILQMQHLKLLFTCGGLFD) lie on the Cytoplasmic side of the membrane. The chain crosses the membrane as a helical span at residues 368-388 (INIKLFGGMLVTLCGYVIIIV). At 389–408 (QFKIQDFALIGYRQNTSDTS) the chain is on the extracellular side. Asparagine 403 carries an N-linked (GlcNAc...) asparagine glycan.

The protein belongs to the insect chemoreceptor superfamily. Gustatory receptor (GR) family. Gr2a subfamily.

The protein localises to the cell membrane. Probable gustatory receptor which mediates acceptance or avoidance behavior, depending on its substrates. In Drosophila melanogaster (Fruit fly), this protein is Putative gustatory receptor 98c (Gr98c).